Here is a 343-residue protein sequence, read N- to C-terminus: UDP-3-O-(3-hydroxymyristoyl)glucosamine N-acyltransferase (343 aa).

The active-site Proton acceptor is the histidine 239.

This sequence belongs to the transferase hexapeptide repeat family. LpxD subfamily. In terms of assembly, homotrimer.

The enzyme catalyses a UDP-3-O-[(3R)-3-hydroxyacyl]-alpha-D-glucosamine + a (3R)-hydroxyacyl-[ACP] = a UDP-2-N,3-O-bis[(3R)-3-hydroxyacyl]-alpha-D-glucosamine + holo-[ACP] + H(+). The catalysed reaction is UDP-3-O-[(3R)-3-hydroxytetradecanoyl]-alpha-D-glucosamine + (3R)-hydroxytetradecanoyl-[ACP] = UDP-2-N,3-O-bis[(3R)-3-hydroxytetradecanoyl]-alpha-D-glucosamine + holo-[ACP] + H(+). Its pathway is glycolipid biosynthesis; lipid IV(A) biosynthesis; lipid IV(A) from (3R)-3-hydroxytetradecanoyl-[acyl-carrier-protein] and UDP-N-acetyl-alpha-D-glucosamine: step 3/6. Its function is as follows. Catalyzes the N-acylation of UDP-3-O-(hydroxytetradecanoyl)glucosamine using 3-hydroxytetradecanoyl-ACP as the acyl donor. Is involved in the biosynthesis of lipid A, a phosphorylated glycolipid that anchors the lipopolysaccharide to the outer membrane of the cell. The sequence is that of UDP-3-O-(3-hydroxymyristoyl)glucosamine N-acyltransferase from Blochmanniella pennsylvanica (strain BPEN).